Consider the following 166-residue polypeptide: Early E3 18.5 kDa glycoprotein (166 aa).

Positions 1-19 are cleaved as a signal peptide; sequence MGPILVLLVLLSLLEPGSA. The Lumenal portion of the chain corresponds to 20–131; that stretch reads NYDPCLDFDP…SKDNIVTFSI (112 aa). Residue asparagine 31 is glycosylated (N-linked (GlcNAc...) asparagine; by host). 2 disulfide bridges follow: cysteine 32-cysteine 50 and cysteine 44-cysteine 106. N-linked (GlcNAc...) asparagine; by host glycans are attached at residues asparagine 63, asparagine 67, and asparagine 97. Residues 132-152 traverse the membrane as a helical segment; sequence AYCLCACLLTALLCVCIHLLV. The Cytoplasmic segment spans residues 153-166; the sequence is TTRIKNANNKEKMP. A Di-lysine motif motif is present at residues 162 to 166; it reads KEKMP.

This sequence belongs to the adenoviridae E19 family. Both disulfide bonds are absolutely critical for the interaction with MHC antigens. In terms of processing, N-glycosylated; high-mannose.

Its subcellular location is the host endoplasmic reticulum membrane. In terms of biological role, binds and retains class I heavy chains in the endoplasmic reticulum during the early period of virus infection, thereby impairing their transport to the cell surface. Also delays the expression of class I alleles that it cannot affect by direct retention. Binds transporters associated with antigen processing (TAP) and acts as a tapasin inhibitor, preventing class I/TAP association. In consequence, infected cells are masked for immune recognition by cytotoxic T-lymphocytes. In Human adenovirus B serotype 11 (strain Slobiski) (HAdV-11), this protein is Early E3 18.5 kDa glycoprotein.